The following is a 1052-amino-acid chain: Focal adhesion kinase 1 (1052 aa).

Residues 1-27 are disordered; it reads MAAAYLDPNLNHTPSSSTKTHLGTGME. Alanine 2 carries the N-acetylalanine modification. Residue tyrosine 5 is modified to Phosphotyrosine. Residues 10–21 show a composition bias toward polar residues; sequence LNHTPSSSTKTH. The residue at position 13 (threonine 13) is a Phosphothreonine. Serine 29 and serine 54 each carry phosphoserine. Positions 35 to 355 constitute an FERM domain; the sequence is RVLKVFHYFE…GYCRLVNGAT (321 aa). Residue lysine 152 forms a Glycyl lysine isopeptide (Lys-Gly) (interchain with G-Cter in SUMO) linkage. Phosphotyrosine occurs at positions 397 and 407. Residue tyrosine 397 is modified to Phosphotyrosine; by autocatalysis. Residues 428-434, lysine 454, and 500-502 each bind ATP; these read IGEGQFG and ELC. In terms of domain architecture, Protein kinase spans 431–680; sequence GQFGDVHQGV…ELKAQLSTIL (250 aa). Aspartate 546 acts as the Proton acceptor in catalysis. Phosphotyrosine is present on tyrosine 570. Phosphotyrosine; by RET and SRC is present on residues tyrosine 576 and tyrosine 577. Serine 580 bears the Phosphoserine mark. Residues 685–697 are compositionally biased toward basic and acidic residues; sequence VQQEERMRMESRR. Disordered regions lie at residues 685–734 and 837–921; these read VQQE…PSPQ and VRLS…DRSN. An interaction with TGFB1I1 region spans residues 707–1052; that stretch reads GSDEAPPKPS…LKMLGQTRPH (346 aa). Serine 722 is modified (phosphoserine). Position 732 is a phosphoserine; by CDK5 (serine 732). Positions 837–849 are enriched in basic and acidic residues; sequence VRLSRGSIDREDG. Residue serine 843 is modified to Phosphoserine. Tyrosine 861 carries the post-translational modification Phosphotyrosine. A compositionally biased stretch (pro residues) spans 869 to 880; it reads PAAPPKKPPRPG. The segment covering 886–896 has biased composition (polar residues); the sequence is SNLSSISSPAD. Serine 910 is subject to Phosphoserine. Residues 912 to 1052 are interaction with ARHGEF28; the sequence is PPTANLDRSN…LKMLGQTRPH (141 aa). Phosphothreonine is present on threonine 914. Residue tyrosine 925 is modified to Phosphotyrosine; by SRC.

It belongs to the protein kinase superfamily. Tyr protein kinase family. FAK subfamily. In terms of assembly, interacts with GIT1. Component of a complex that contains at least FER, CTTN and PTK2/FAK1. Interacts with BMX. Interacts with STEAP4. Interacts with ZFYVE21. Interacts with ESR1. Interacts with FGR, FLT4 and RET. Interacts with EPHA2 in resting cells; activation of EPHA2 recruits PTPN11, leading to dephosphorylation of PTK2/FAK1 and dissociation of the complex. Interacts with EPHA1 (kinase activity-dependent). Interacts with MISP. Interacts with PIAS1. Interacts with ARHGAP26 and SHC1. Interacts with RB1CC1; this inhibits PTK2/FAK1 activity and activation of downstream signaling pathways. Interacts with P53/TP53. Interacts with STAT1. Interacts with WASL. Interacts with ARHGEF7. Interacts with DCC. Interacts (via first Pro-rich region) with CAS family members (via SH3 domain), including BCAR1, BCAR3 and CASS4. Interacts with NEDD9 (via C-terminus). Interacts with SORBS1. Interacts with ARHGEF28. Interacts with SHB. Part of a complex composed of THSD1, PTK2/FAK1, TLN1 and VCL. Interacts with PXN and TLN1. Interacts with TGFB1I1. Interacts with PIK3R1 or PIK3R2. Interacts with SRC, GRB2 and GRB7. Interacts with LPXN (via LD motif 3). Interacts with CD36. Interacts with EMP2; regulates PTK2 activation and localization. Interacts with DSCAM. Interacts with AMBRA1. Interacts (when tyrosine-phosphorylated) with tensin TNS1; the interaction is increased by phosphorylation of TNS1. Phosphorylated on tyrosine residues upon activation, e.g. upon integrin signaling. Tyr-397 is the major autophosphorylation site, but other kinases can also phosphorylate this residue. Phosphorylation at Tyr-397 promotes interaction with SRC and SRC family members, leading to phosphorylation at Tyr-576, Tyr-577 and at additional tyrosine residues. FGR promotes phosphorylation at Tyr-397 and Tyr-576. FER promotes phosphorylation at Tyr-577, Tyr-861 and Tyr-925, even when cells are not adherent. Tyr-397, Tyr-576 and Ser-722 are phosphorylated only when cells are adherent. Phosphorylation at Tyr-397 is important for interaction with BMX, PIK3R1 and SHC1. Phosphorylation at Tyr-925 is important for interaction with GRB2. Dephosphorylated by PTPN11; PTPN11 is recruited to PTK2 via EPHA2 (tyrosine phosphorylated). Microtubule-induced dephosphorylation at Tyr-397 is crucial for the induction of focal adhesion disassembly; this dephosphorylation could be catalyzed by PTPN11 and regulated by ZFYVE21. Phosphorylation on tyrosine residues is enhanced by NTN1. In terms of processing, sumoylated; this enhances autophosphorylation.

The protein resides in the cell junction. It localises to the focal adhesion. The protein localises to the cell membrane. Its subcellular location is the cytoplasm. It is found in the perinuclear region. The protein resides in the cell cortex. It localises to the cytoskeleton. The protein localises to the microtubule organizing center. Its subcellular location is the centrosome. It is found in the nucleus. The protein resides in the cilium basal body. It carries out the reaction L-tyrosyl-[protein] + ATP = O-phospho-L-tyrosyl-[protein] + ADP + H(+). Its activity is regulated as follows. Subject to autoinhibition, mediated by interactions between the FERM domain and the kinase domain. Activated by autophosphorylation at Tyr-397. This promotes interaction with SRC and phosphorylation at Tyr-576 and Tyr-577 in the kinase activation loop by SRC. Phosphorylation at Tyr-397, Tyr-576 and Tyr-577 is required for maximal kinase activity. Functionally, non-receptor protein-tyrosine kinase that plays an essential role in regulating cell migration, adhesion, spreading, reorganization of the actin cytoskeleton, formation and disassembly of focal adhesions and cell protrusions, cell cycle progression, cell proliferation and apoptosis. Required for early embryonic development and placenta development. Required for embryonic angiogenesis, normal cardiomyocyte migration and proliferation, and normal heart development. Regulates axon growth and neuronal cell migration, axon branching and synapse formation; required for normal development of the nervous system. Plays a role in osteogenesis and differentiation of osteoblasts. Functions in integrin signal transduction, but also in signaling downstream of numerous growth factor receptors, G-protein coupled receptors (GPCR), EPHA2, netrin receptors and LDL receptors. Forms multisubunit signaling complexes with SRC and SRC family members upon activation; this leads to the phosphorylation of additional tyrosine residues, creating binding sites for scaffold proteins, effectors and substrates. Regulates numerous signaling pathways. Promotes activation of phosphatidylinositol 3-kinase and the AKT1 signaling cascade. Promotes activation of MAPK1/ERK2, MAPK3/ERK1 and the MAP kinase signaling cascade. Promotes localized and transient activation of guanine nucleotide exchange factors (GEFs) and GTPase-activating proteins (GAPs), and thereby modulates the activity of Rho family GTPases. Signaling via CAS family members mediates activation of RAC1. Phosphorylates NEDD9 following integrin stimulation. Recruits the ubiquitin ligase MDM2 to P53/TP53 in the nucleus, and thereby regulates P53/TP53 activity, P53/TP53 ubiquitination and proteasomal degradation. Phosphorylates SRC; this increases SRC kinase activity. Phosphorylates ACTN1, ARHGEF7, GRB7, RET and WASL. Promotes phosphorylation of PXN and STAT1; most likely PXN and STAT1 are phosphorylated by a SRC family kinase that is recruited to autophosphorylated PTK2/FAK1, rather than by PTK2/FAK1 itself. Promotes phosphorylation of BCAR1; GIT2 and SHC1; this requires both SRC and PTK2/FAK1. Promotes phosphorylation of BMX and PIK3R1. Does not contain a kinase domain and inhibits PTK2/FAK1 phosphorylation and signaling. Its enhanced expression can attenuate the nuclear accumulation of LPXN and limit its ability to enhance serum response factor (SRF)-dependent gene transcription. The polypeptide is Focal adhesion kinase 1 (Mus musculus (Mouse)).